We begin with the raw amino-acid sequence, 294 residues long: uncharacterized protein (294 aa).

Residues 5–25 traverse the membrane as a helical segment; that stretch reads ILIILIIIIIVIISLIYLKNF. N-linked (GlcNAc...) asparagine; by host glycosylation is found at Asn151, Asn170, Asn205, and Asn271.

The protein localises to the membrane. This is an uncharacterized protein from Acanthamoeba polyphaga (Amoeba).